We begin with the raw amino-acid sequence, 141 residues long: uncharacterized protein (141 aa).

Residues 8 to 112 (IGQVFKTKSL…VLDKQPKRNE (105 aa)) form the MaoC-like domain.

This is an uncharacterized protein from Bacillus subtilis (strain 168).